The primary structure comprises 96 residues: Mapk-regulated corepressor-interacting protein 1 (96 aa).

Disordered stretches follow at residues 1-28 (MASS…GSEI) and 76-96 (AFKP…AKKS). The PXDLS motif signature appears at 79-83 (PVDLS). A compositionally biased stretch (basic and acidic residues) spans 81-96 (DLSDLKRRNTQDAKKS).

Belongs to the MCRIP family.

It is found in the nucleus. It localises to the cytoplasm. The protein resides in the stress granule. In terms of biological role, may play a role in the regulation of the epithelial-mesenchymal transition. The chain is Mapk-regulated corepressor-interacting protein 1 (MCRIP1) from Gallus gallus (Chicken).